A 351-amino-acid polypeptide reads, in one-letter code: MEEEKILESDLRHISFVMPKYTPIEKIGEGSFSVVYKALDAESGRYVALKAITRTSSPARVLDEMMFLKTLGGRKNCMGLLGCFRNEDQVVAVFPYFEPIDFREFISNANLADIKRYLHNLLIAIEHVHSNGIMHRDLKPGNFLYNKESGRGMLIDFGLAQYEEYSEGQHAEGGAKPAGPLLFFNSVVSKTKPPGYYERDGRPPMKAPRAGTRGFRAPEVLFRCQRQTGAIDMWSVGVIFLTILTTQYPFFYSSDDIDSIVEIATIFGHAEMRKAAKFYGRVWRSNIDSIPEERIPFETIVESLNPWAEVGSDGYDLLYRMLDLCSSSRITASDALSHPFFDDLKTHENCA.

The region spanning 21-341 is the Protein kinase domain; it reads YTPIEKIGEG…ASDALSHPFF (321 aa). Residues 27-35 and K50 each bind ATP; that span reads IGEGSFSVV. The Proton acceptor role is filled by D137.

The protein belongs to the protein kinase superfamily. Ser/Thr protein kinase family. CDC7 subfamily. Mg(2+) is required as a cofactor.

It carries out the reaction L-seryl-[protein] + ATP = O-phospho-L-seryl-[protein] + ADP + H(+). It catalyses the reaction L-threonyl-[protein] + ATP = O-phospho-L-threonyl-[protein] + ADP + H(+). Functionally, serine/threonine-protein kinase. Needed for the initiation of DNA synthesis during mitosis as well as for synaptonemal complex formation and commitment to recombination during meiosis. The sequence is that of Probable cell division control protein 7 homolog 2 (CDC7-2) from Encephalitozoon cuniculi (strain GB-M1) (Microsporidian parasite).